A 588-amino-acid polypeptide reads, in one-letter code: Adenylate kinase 5, chloroplastic (588 aa).

The disordered stretch occupies residues 1–34 (MASLSLSSAHFSSTSSSSRSSISTSSLSPSSTSL). Residues 1 to 73 (MASLSLSSAH…SFSTSNSQIR (73 aa)) constitute a chloroplast transit peptide. 89–94 (ASGKGT) lines the ATP pocket. An NMP region spans residues 109–138 (STGDLLRAEVSSGTDIGKRAKEFMNSGSLV). AMP contacts are provided by residues Arg115, 136-138 (SLV), 165-168 (GFPR), and Gln172. Positions 202-235 (GRRLDPVTGKIYHIKNYPPESDEIKARLVTRPDD) are LID. Arg203 lines the ATP pocket. AMP-binding residues include Arg232 and Arg243.

This sequence belongs to the adenylate kinase family. As to quaternary structure, monomer.

It is found in the plastid. Its subcellular location is the chloroplast. The enzyme catalyses AMP + ATP = 2 ADP. Catalyzes the reversible transfer of the terminal phosphate group between ATP and AMP. The polypeptide is Adenylate kinase 5, chloroplastic (Arabidopsis thaliana (Mouse-ear cress)).